Consider the following 469-residue polypeptide: 3-isopropylmalate dehydratase large subunit (469 aa).

The [4Fe-4S] cluster site is built by C347, C407, and C410.

It belongs to the aconitase/IPM isomerase family. LeuC type 1 subfamily. Heterodimer of LeuC and LeuD. It depends on [4Fe-4S] cluster as a cofactor.

It carries out the reaction (2R,3S)-3-isopropylmalate = (2S)-2-isopropylmalate. Its pathway is amino-acid biosynthesis; L-leucine biosynthesis; L-leucine from 3-methyl-2-oxobutanoate: step 2/4. Its function is as follows. Catalyzes the isomerization between 2-isopropylmalate and 3-isopropylmalate, via the formation of 2-isopropylmaleate. This Proteus mirabilis (strain HI4320) protein is 3-isopropylmalate dehydratase large subunit.